A 151-amino-acid polypeptide reads, in one-letter code: Large ribosomal subunit protein bL9 (151 aa).

The protein belongs to the bacterial ribosomal protein bL9 family.

Functionally, binds to the 23S rRNA. The sequence is that of Large ribosomal subunit protein bL9 from Nitrosospira multiformis (strain ATCC 25196 / NCIMB 11849 / C 71).